Reading from the N-terminus, the 302-residue chain is Probable alpha-L-glutamate ligase (302 aa).

The region spanning 105 to 288 is the ATP-grasp domain; it reads LQLLARKGIP…LAGKIIEYIE (184 aa). ATP-binding positions include lysine 142, 179–180, aspartate 188, and 212–214; these read EF and RAN. 3 residues coordinate Mg(2+): aspartate 249, glutamate 261, and asparagine 263. Mn(2+) is bound by residues aspartate 249, glutamate 261, and asparagine 263.

The protein belongs to the RimK family. Requires Mg(2+) as cofactor. The cofactor is Mn(2+).

This is Probable alpha-L-glutamate ligase from Legionella pneumophila (strain Paris).